Here is a 1238-residue protein sequence, read N- to C-terminus: DNA-directed RNA polymerase subunit beta (1238 aa).

It belongs to the RNA polymerase beta chain family. In terms of assembly, the RNAP catalytic core consists of 2 alpha, 1 beta, 1 beta' and 1 omega subunit. When a sigma factor is associated with the core the holoenzyme is formed, which can initiate transcription.

It catalyses the reaction RNA(n) + a ribonucleoside 5'-triphosphate = RNA(n+1) + diphosphate. Its function is as follows. DNA-dependent RNA polymerase catalyzes the transcription of DNA into RNA using the four ribonucleoside triphosphates as substrates. This Clostridioides difficile (strain 630) (Peptoclostridium difficile) protein is DNA-directed RNA polymerase subunit beta.